A 489-amino-acid chain; its full sequence is N-succinylglutamate 5-semialdehyde dehydrogenase 1 (489 aa).

223–228 (GSSRTG) is an NAD(+) binding site. Active-site residues include Glu246 and Cys280.

The protein belongs to the aldehyde dehydrogenase family. AstD subfamily.

The catalysed reaction is N-succinyl-L-glutamate 5-semialdehyde + NAD(+) + H2O = N-succinyl-L-glutamate + NADH + 2 H(+). The protein operates within amino-acid degradation; L-arginine degradation via AST pathway; L-glutamate and succinate from L-arginine: step 4/5. Catalyzes the NAD-dependent reduction of succinylglutamate semialdehyde into succinylglutamate. This chain is N-succinylglutamate 5-semialdehyde dehydrogenase 1, found in Pseudoalteromonas translucida (strain TAC 125).